The primary structure comprises 700 residues: Beta-galactosidase BgaB (700 aa).

Positions 122 and 160 each coordinate substrate. E161 functions as the Proton donor in the catalytic mechanism. The Nucleophile role is filled by E320. Substrate-binding positions include W328 and 368-371 (EAFH).

Belongs to the glycosyl hydrolase 42 family. Trimer. Tetramer. In terms of processing, the N-terminus is blocked.

The catalysed reaction is Hydrolysis of terminal non-reducing beta-D-galactose residues in beta-D-galactosides.. Inhibited by high substrate concentrations (100 mg/ml). No effect on activity with various EDTA concentrations (0-1 mM). 20-fold higher activity when cells grown on TOS than when cells grown on galactose, glucose and lactose. Functionally, involved in the hydrolysis of transgalactooligosaccharides (TOS). Highly active towards Gal(beta1-4)Gal and Gal(beta1-4)-Gal-containing oligosaccharides. Low activity towards Gal(beta1-3)Gal, lactose and Gal(beta1-3)GalOMe. No activity towards Gal(beta1-6)Gal, Gal(beta1-4)Man, Gal(alpha1-4)Gal, Gal(alpha1-3)Gal(beta1-4)Gal, lactulose, 3'fucosyllactose, lacto-N-fucopentaose I, lacto-N-fucopentaose II, cellobiose, maltose or sucrose. No transglycosylation activity is found at high substrate concentrations (100 mg/ml) and only low transglycosylation activity at lower substrate concentrations (10 mg/ml). The protein is Beta-galactosidase BgaB (bgaB) of Bifidobacterium adolescentis (strain ATCC 15703 / DSM 20083 / NCTC 11814 / E194a).